The primary structure comprises 287 residues: MPIIKTAGIISKPNSTAAEEIVPKLIEWLRRRGIAVRIDEQTSLYSGGVSGMPREEVPQSCDLVVVLGGDGTLLSAARAIGRREIPLFPVNLGGLGFLTAISIEELYPELERALRGEHRIAKRKLMTTEVIRENNVIASFDALNDAVLTKSSIARMIDLDTYVDEQFVCAYKADGLIIATPTGSTAYSLSAGGPIIFPSVPAICLTPICPHMLTNRPVLVPETSVIRVASRGPDESVYLTIDGQVGTPIREHDTVVCHSSHHSLLLIRPPRMMFFDVLRQKLKWGER.

Aspartate 70 serves as the catalytic Proton acceptor. NAD(+) contacts are provided by residues 70-71 (DG), 144-145 (ND), arginine 155, lysine 172, aspartate 174, 185-190 (TAYSLS), and glutamine 244.

The protein belongs to the NAD kinase family. It depends on a divalent metal cation as a cofactor.

Its subcellular location is the cytoplasm. It carries out the reaction NAD(+) + ATP = ADP + NADP(+) + H(+). Its function is as follows. Involved in the regulation of the intracellular balance of NAD and NADP, and is a key enzyme in the biosynthesis of NADP. Catalyzes specifically the phosphorylation on 2'-hydroxyl of the adenosine moiety of NAD to yield NADP. The chain is NAD kinase from Solibacter usitatus (strain Ellin6076).